Reading from the N-terminus, the 392-residue chain is DNA replication protein (392 aa).

Residues 322-341 (NGGNKKISEGTSRAQRKAPH) are disordered.

May play a role in viral DNA replication. Found associated with a viral DNA origin of replication and with host membranes, may attach this origin to the bacterial envelope to initiate replication. This chain is DNA replication protein (69), found in Enterobacteria phage T4 (Bacteriophage T4).